Reading from the N-terminus, the 150-residue chain is Ribosome-binding factor A (150 aa).

The interval 126 to 150 (EVARDLSHDDDEDGGADEAPRNGDE) is disordered.

This sequence belongs to the RbfA family. In terms of assembly, monomer. Binds 30S ribosomal subunits, but not 50S ribosomal subunits or 70S ribosomes.

It is found in the cytoplasm. One of several proteins that assist in the late maturation steps of the functional core of the 30S ribosomal subunit. Associates with free 30S ribosomal subunits (but not with 30S subunits that are part of 70S ribosomes or polysomes). Required for efficient processing of 16S rRNA. May interact with the 5'-terminal helix region of 16S rRNA. The chain is Ribosome-binding factor A from Brucella suis (strain ATCC 23445 / NCTC 10510).